The sequence spans 365 residues: Isopentenyl-diphosphate delta-isomerase (365 aa).

Position 8–9 (8–9 (RK)) interacts with substrate. FMN is bound by residues 67–69 (SIT), serine 97, and asparagine 126. 97-99 (SQR) contributes to the substrate binding site. Residue glutamine 160 participates in substrate binding. Residue glutamate 161 coordinates Mg(2+). FMN is bound by residues lysine 192, threonine 222, 272 to 274 (GVR), and 293 to 294 (AL).

It belongs to the IPP isomerase type 2 family. Homooctamer. Dimer of tetramers. FMN is required as a cofactor. NADPH serves as cofactor. The cofactor is Mg(2+).

It is found in the cytoplasm. It catalyses the reaction isopentenyl diphosphate = dimethylallyl diphosphate. In terms of biological role, involved in the biosynthesis of isoprenoids. Catalyzes the 1,3-allylic rearrangement of the homoallylic substrate isopentenyl (IPP) to its allylic isomer, dimethylallyl diphosphate (DMAPP). This is Isopentenyl-diphosphate delta-isomerase from Methanosarcina acetivorans (strain ATCC 35395 / DSM 2834 / JCM 12185 / C2A).